A 184-amino-acid polypeptide reads, in one-letter code: Probable DNA-directed RNA polymerase subunit delta (184 aa).

The HTH HARE-type domain occupies 14–81 (LSMIEVARAI…GENVWALRSW (68 aa)). Disordered stretches follow at residues 88-107 (DEEV…KHHK) and 118-184 (GDDD…DEDD). Over residues 118–164 (GDDDIIDYDNDDPEDDDLDAATDDSDDDYSDDDSDYDEDNDDADDVL) the composition is skewed to acidic residues.

It belongs to the RpoE family. RNAP is composed of a core of 2 alpha, a beta and a beta' subunits. The core is associated with a delta subunit and one of several sigma factors.

In terms of biological role, participates in both the initiation and recycling phases of transcription. In the presence of the delta subunit, RNAP displays an increased specificity of transcription, a decreased affinity for nucleic acids, and an increased efficiency of RNA synthesis because of enhanced recycling. The chain is Probable DNA-directed RNA polymerase subunit delta from Lactobacillus acidophilus (strain ATCC 700396 / NCK56 / N2 / NCFM).